The following is a 345-amino-acid chain: Anthranilate phosphoribosyltransferase (345 aa).

Residues Gly84, 87–88 (GD), Thr92, 94–97 (NIST), 112–120 (KHGGRGVSS), and Ser124 each bind 5-phospho-alpha-D-ribose 1-diphosphate. Position 84 (Gly84) interacts with anthranilate. Ser96 contacts Mg(2+). Residue Arg170 participates in anthranilate binding. Mg(2+) is bound by residues Asp229 and Glu230.

Belongs to the anthranilate phosphoribosyltransferase family. In terms of assembly, homodimer. It depends on Mg(2+) as a cofactor.

It catalyses the reaction N-(5-phospho-beta-D-ribosyl)anthranilate + diphosphate = 5-phospho-alpha-D-ribose 1-diphosphate + anthranilate. It participates in amino-acid biosynthesis; L-tryptophan biosynthesis; L-tryptophan from chorismate: step 2/5. Catalyzes the transfer of the phosphoribosyl group of 5-phosphorylribose-1-pyrophosphate (PRPP) to anthranilate to yield N-(5'-phosphoribosyl)-anthranilate (PRA). This Paracidovorax citrulli (strain AAC00-1) (Acidovorax citrulli) protein is Anthranilate phosphoribosyltransferase.